A 182-amino-acid polypeptide reads, in one-letter code: Tropomyosin-like protein (182 aa).

Positions 1 to 68 (FDRYNQILDE…ELEQRRTEQQ (68 aa)) form a coiled coil. A compositionally biased stretch (basic and acidic residues) spans 32 to 66 (DEETKKIKQEEAEMKKKIEGEASRKKLELEQRRTE). Disordered stretches follow at residues 32–81 (DEET…GSTD) and 140–160 (DQPA…DAGL). The span at 140–153 (DQPAQAGPEPAAPA) shows a compositional bias: low complexity.

It is found in the cytoplasm. It localises to the cytoskeleton. This Pichia angusta (Yeast) protein is Tropomyosin-like protein.